The chain runs to 462 residues: Exodeoxyribonuclease 7 large subunit (462 aa).

Belongs to the XseA family. As to quaternary structure, heterooligomer composed of large and small subunits.

It is found in the cytoplasm. The catalysed reaction is Exonucleolytic cleavage in either 5'- to 3'- or 3'- to 5'-direction to yield nucleoside 5'-phosphates.. Its function is as follows. Bidirectionally degrades single-stranded DNA into large acid-insoluble oligonucleotides, which are then degraded further into small acid-soluble oligonucleotides. This Pectobacterium atrosepticum (strain SCRI 1043 / ATCC BAA-672) (Erwinia carotovora subsp. atroseptica) protein is Exodeoxyribonuclease 7 large subunit.